A 165-amino-acid polypeptide reads, in one-letter code: Putative tyrosine-protein phosphatase AMV078 (165 aa).

The Tyrosine-protein phosphatase domain maps to 2–149; it reads NISNINNDIY…LKFYNSYKNI (148 aa). The active-site Phosphocysteine intermediate is the C94.

This sequence belongs to the protein-tyrosine phosphatase family. Non-receptor class dual specificity subfamily.

The catalysed reaction is O-phospho-L-tyrosyl-[protein] + H2O = L-tyrosyl-[protein] + phosphate. The chain is Putative tyrosine-protein phosphatase AMV078 from Amsacta moorei entomopoxvirus (AmEPV).